The primary structure comprises 452 residues: Phosphoglucosamine mutase (452 aa).

The Phosphoserine intermediate role is filled by Ser104. The Mg(2+) site is built by Ser104, Asp246, Asp248, and Asp250. Residue Ser104 is modified to Phosphoserine.

It belongs to the phosphohexose mutase family. The cofactor is Mg(2+). Activated by phosphorylation.

The catalysed reaction is alpha-D-glucosamine 1-phosphate = D-glucosamine 6-phosphate. Functionally, catalyzes the conversion of glucosamine-6-phosphate to glucosamine-1-phosphate. The chain is Phosphoglucosamine mutase from Streptomyces coelicolor (strain ATCC BAA-471 / A3(2) / M145).